The chain runs to 192 residues: 3-hydroxyanthranilate 3,4-dioxygenase 1 (192 aa).

Arginine 50 lines the O2 pocket. Positions 54, 60, and 102 each coordinate Fe cation. Glutamate 60 serves as a coordination point for substrate. Positions 106 and 116 each coordinate substrate. Positions 131, 134, 168, and 171 each coordinate a divalent metal cation.

Belongs to the 3-HAO family. Requires Fe(2+) as cofactor.

The protein resides in the cytoplasm. The catalysed reaction is 3-hydroxyanthranilate + O2 = (2Z,4Z)-2-amino-3-carboxymuconate 6-semialdehyde. The protein operates within cofactor biosynthesis; NAD(+) biosynthesis; quinolinate from L-kynurenine: step 3/3. Functionally, catalyzes the oxidative ring opening of 3-hydroxyanthranilate to 2-amino-3-carboxymuconate semialdehyde, which spontaneously cyclizes to quinolinate. The chain is 3-hydroxyanthranilate 3,4-dioxygenase 1 (bna1-1) from Aspergillus fumigatus (strain CBS 144.89 / FGSC A1163 / CEA10) (Neosartorya fumigata).